The primary structure comprises 264 residues: Phosphonoacetaldehyde hydrolase (264 aa).

Residue aspartate 9 is the Nucleophile of the active site. Residues aspartate 9 and alanine 11 each contribute to the Mg(2+) site. The active-site Schiff-base intermediate with substrate is lysine 50. Mg(2+) is bound at residue aspartate 183.

Belongs to the HAD-like hydrolase superfamily. PhnX family. As to quaternary structure, homodimer. The cofactor is Mg(2+).

The enzyme catalyses phosphonoacetaldehyde + H2O = acetaldehyde + phosphate + H(+). Involved in phosphonate degradation. This is Phosphonoacetaldehyde hydrolase from Bacillus cereus (strain B4264).